The primary structure comprises 211 residues: BAG family molecular chaperone regulator 2 (211 aa).

A2 is modified (N-acetylalanine). Residues S20, S31, and S73 each carry the phosphoserine modification. A coiled-coil region spans residues 20 to 61 (SMADRSSRLLESLDQLELRVEALREAATAVEQEKEVLLEMIH). The region spanning 109–189 (SLKHATRIID…NIENADKAIK (81 aa)) is the BAG domain.

As to quaternary structure, binds to the ATPase domain of HSP/HSC70 chaperones. May interact with NWD1. Interacts with HSPA1A (via NBD), HSPA1B (via NBD) and HSPA8. May interact with DNJC9; the interaction seems to be histone-dependent.

Functionally, co-chaperone for HSP70 and HSC70 chaperone proteins. Acts as a nucleotide-exchange factor (NEF) promoting the release of ADP from the HSP70 and HSC70 proteins thereby triggering client/substrate protein release. The polypeptide is BAG family molecular chaperone regulator 2 (Bos taurus (Bovine)).